The primary structure comprises 1449 residues: Disease resistance protein RPP5 (1449 aa).

In terms of domain architecture, TIR spans R10–L178. The active site involves E85. Residues E192–V446 form the NB-ARC domain. LRR repeat units follow at residues M549–P573, L574–A595, Y597–L618, G619–R642, L644–A665, M687–P710, K712–V732, E733–L755, G756–I779, A802–L825, E826–C849, L915–T939, L941–L962, Q963–L985, S986–W1011, A1028–L1052, Q1053–S1077, S1096–F1119, and T1120–L1143.

As to quaternary structure, interacts with RSH1.

The enzyme catalyses NAD(+) + H2O = ADP-D-ribose + nicotinamide + H(+). Its function is as follows. TIR-NB-LRR receptor-like protein that confers resistance to the pathogen Hyaloperonospora arabidopsis isolate Noco2 (downy mildew disease). Confers resistance to H.arabidopsis isolates Emoy2, Emwa1 and Noco2. This Arabidopsis thaliana (Mouse-ear cress) protein is Disease resistance protein RPP5.